The following is a 441-amino-acid chain: ATP-dependent protease ATPase subunit HslU (441 aa).

ATP-binding positions include I18 and 60 to 65 (GVGKTE). Positions 131-158 (ILDALLPRPRGSEYDHARDESSTRQTFR) are disordered. Residues 140–152 (RGSEYDHARDESS) show a composition bias toward basic and acidic residues. ATP is bound by residues D254, E320, and R392.

The protein belongs to the ClpX chaperone family. HslU subfamily. In terms of assembly, a double ring-shaped homohexamer of HslV is capped on each side by a ring-shaped HslU homohexamer. The assembly of the HslU/HslV complex is dependent on binding of ATP.

It localises to the cytoplasm. ATPase subunit of a proteasome-like degradation complex; this subunit has chaperone activity. The binding of ATP and its subsequent hydrolysis by HslU are essential for unfolding of protein substrates subsequently hydrolyzed by HslV. HslU recognizes the N-terminal part of its protein substrates and unfolds these before they are guided to HslV for hydrolysis. This Chromohalobacter salexigens (strain ATCC BAA-138 / DSM 3043 / CIP 106854 / NCIMB 13768 / 1H11) protein is ATP-dependent protease ATPase subunit HslU.